The chain runs to 366 residues: Carbamoyl phosphate synthase small chain (366 aa).

The CPSase stretch occupies residues 1 to 174; that stretch reads MQEIPAILVL…GERYTVDNPD (174 aa). L-glutamine contacts are provided by Ser-48, Gly-226, and Gly-228. The Glutamine amidotransferase type-1 domain maps to 178 to 366; the sequence is HVVAFDYGIK…FTELMERLKN (189 aa). Residue Cys-256 is the Nucleophile of the active site. Leu-257, Gln-260, Asn-298, Gly-300, and Phe-301 together coordinate L-glutamine. Catalysis depends on residues His-340 and Glu-342.

It belongs to the CarA family. As to quaternary structure, composed of two chains; the small (or glutamine) chain promotes the hydrolysis of glutamine to ammonia, which is used by the large (or ammonia) chain to synthesize carbamoyl phosphate. Tetramer of heterodimers (alpha,beta)4.

The catalysed reaction is hydrogencarbonate + L-glutamine + 2 ATP + H2O = carbamoyl phosphate + L-glutamate + 2 ADP + phosphate + 2 H(+). It carries out the reaction L-glutamine + H2O = L-glutamate + NH4(+). Its pathway is amino-acid biosynthesis; L-arginine biosynthesis; carbamoyl phosphate from bicarbonate: step 1/1. The protein operates within pyrimidine metabolism; UMP biosynthesis via de novo pathway; (S)-dihydroorotate from bicarbonate: step 1/3. Functionally, small subunit of the glutamine-dependent carbamoyl phosphate synthetase (CPSase). CPSase catalyzes the formation of carbamoyl phosphate from the ammonia moiety of glutamine, carbonate, and phosphate donated by ATP, constituting the first step of 2 biosynthetic pathways, one leading to arginine and/or urea and the other to pyrimidine nucleotides. The small subunit (glutamine amidotransferase) binds and cleaves glutamine to supply the large subunit with the substrate ammonia. The chain is Carbamoyl phosphate synthase small chain from Chlorobaculum tepidum (strain ATCC 49652 / DSM 12025 / NBRC 103806 / TLS) (Chlorobium tepidum).